The sequence spans 220 residues: Protein-L-isoaspartate O-methyltransferase (220 aa).

Residue serine 67 is part of the active site.

The protein belongs to the methyltransferase superfamily. L-isoaspartyl/D-aspartyl protein methyltransferase family.

It localises to the cytoplasm. The catalysed reaction is [protein]-L-isoaspartate + S-adenosyl-L-methionine = [protein]-L-isoaspartate alpha-methyl ester + S-adenosyl-L-homocysteine. In terms of biological role, catalyzes the methyl esterification of L-isoaspartyl residues in peptides and proteins that result from spontaneous decomposition of normal L-aspartyl and L-asparaginyl residues. It plays a role in the repair and/or degradation of damaged proteins. The polypeptide is Protein-L-isoaspartate O-methyltransferase (Chlorobium phaeobacteroides (strain BS1)).